The sequence spans 42 residues: Potassium channel toxin gamma-KTx 3.4 (42 aa).

Disulfide bonds link Cys5–Cys23, Cys11–Cys34, Cys20–Cys39, and Cys24–Cys41.

The protein belongs to the ergtoxin family. Gamma-KTx 3 subfamily. As to expression, expressed by the venom gland.

The protein localises to the secreted. Blocks Kv11/ERG potassium channels. The sequence is that of Potassium channel toxin gamma-KTx 3.4 from Centruroides gracilis (Slenderbrown scorpion).